The following is a 214-amino-acid chain: Ras-related protein RABA2b (214 aa).

19–26 contacts GTP; sequence GDSGVGKS. An Effector region motif is present at residues 41–49; sequence SKSTIGVEF. GTP-binding positions include 67–71, 125–128, and 155–156; these read DTAGQ, NKSD, and SA. 2 S-geranylgeranyl cysteine lipidation sites follow: Cys-211 and Cys-212.

The protein belongs to the small GTPase superfamily. Rab family. As to expression, expressed in root tips.

Its subcellular location is the endosome membrane. The protein localises to the golgi apparatus. It is found in the trans-Golgi network membrane. In terms of biological role, intracellular vesicle trafficking and protein transport. This Arabidopsis thaliana (Mouse-ear cress) protein is Ras-related protein RABA2b (RABA2B).